A 183-amino-acid chain; its full sequence is Shikimate kinase (183 aa).

Position 19 to 24 (19 to 24 (GAGKTT)) interacts with ATP. Thr23 contacts Mg(2+). Positions 41, 65, and 87 each coordinate substrate. An ATP-binding site is contributed by Arg124. Substrate is bound at residue Arg143.

The protein belongs to the shikimate kinase family. As to quaternary structure, monomer. The cofactor is Mg(2+).

The protein localises to the cytoplasm. The enzyme catalyses shikimate + ATP = 3-phosphoshikimate + ADP + H(+). Its pathway is metabolic intermediate biosynthesis; chorismate biosynthesis; chorismate from D-erythrose 4-phosphate and phosphoenolpyruvate: step 5/7. Its function is as follows. Catalyzes the specific phosphorylation of the 3-hydroxyl group of shikimic acid using ATP as a cosubstrate. The protein is Shikimate kinase of Thermosynechococcus vestitus (strain NIES-2133 / IAM M-273 / BP-1).